The following is a 546-amino-acid chain: Chaperonin GroEL (546 aa).

ATP is bound by residues 30–33 (TLGP), Lys51, 87–91 (DGTTT), Gly415, and Asp497. The tract at residues 527–546 (PKKDSPAPAMPGGGMGGMDF) is disordered. Residues 537–546 (PGGGMGGMDF) show a composition bias toward gly residues.

Belongs to the chaperonin (HSP60) family. Forms a cylinder of 14 subunits composed of two heptameric rings stacked back-to-back. Interacts with the co-chaperonin GroES.

It localises to the cytoplasm. The catalysed reaction is ATP + H2O + a folded polypeptide = ADP + phosphate + an unfolded polypeptide.. Functionally, together with its co-chaperonin GroES, plays an essential role in assisting protein folding. The GroEL-GroES system forms a nano-cage that allows encapsulation of the non-native substrate proteins and provides a physical environment optimized to promote and accelerate protein folding. The protein is Chaperonin GroEL of Methylorubrum populi (strain ATCC BAA-705 / NCIMB 13946 / BJ001) (Methylobacterium populi).